A 106-amino-acid polypeptide reads, in one-letter code: Transcription and mRNA export factor SUS1 (106 aa).

Belongs to the ENY2 family. In terms of assembly, component of the nuclear pore complex (NPC)-associated TREX-2 complex (transcription and export complex 2), composed of at least SUS1, SAC3, THP1, SEM1, and CDC31. TREX-2 contains 2 SUS1 chains. The TREX-2 complex interacts with the nucleoporin NUP1. Component of the 1.8 MDa SAGA transcription coactivator-HAT complex. SAGA is built of 5 distinct domains with specialized functions. Within the SAGA complex, SUS1, SGF11, SGF73 and UBP8 form an additional subcomplex of SAGA called the DUB module (deubiquitination module). Interacts directly with THP1, SAC3, SGF11, and with the RNA polymerase II.

It localises to the nucleus. Its subcellular location is the nucleoplasm. It is found in the cytoplasm. The protein resides in the P-body. Its function is as follows. Involved in mRNA export coupled transcription activation by association with both the TREX-2 and the SAGA complexes. At the promoters, SAGA is required for recruitment of the basal transcription machinery. It influences RNA polymerase II transcriptional activity through different activities such as TBP interaction and promoter selectivity, interaction with transcription activators, and chromatin modification through histone acetylation and deubiquitination. Within the SAGA complex, participates in a subcomplex required for deubiquitination of H2B and for the maintenance of steady-state H3 methylation levels. The TREX-2 complex functions in docking export-competent ribonucleoprotein particles (mRNPs) to the nuclear entrance of the nuclear pore complex (nuclear basket). TREX-2 participates in mRNA export and accurate chromatin positioning in the nucleus by tethering genes to the nuclear periphery. May also be involved in cytoplasmic mRNA decay by interaction with components of P-bodies. This is Transcription and mRNA export factor SUS1 from Mycosarcoma maydis (Corn smut fungus).